The chain runs to 513 residues: ATP synthase subunit alpha (513 aa).

ATP is bound at residue 169-176 (GDRQTGKT).

This sequence belongs to the ATPase alpha/beta chains family. F-type ATPases have 2 components, CF(1) - the catalytic core - and CF(0) - the membrane proton channel. CF(1) has five subunits: alpha(3), beta(3), gamma(1), delta(1), epsilon(1). CF(0) has three main subunits: a(1), b(2) and c(9-12). The alpha and beta chains form an alternating ring which encloses part of the gamma chain. CF(1) is attached to CF(0) by a central stalk formed by the gamma and epsilon chains, while a peripheral stalk is formed by the delta and b chains.

The protein localises to the cell inner membrane. The catalysed reaction is ATP + H2O + 4 H(+)(in) = ADP + phosphate + 5 H(+)(out). Produces ATP from ADP in the presence of a proton gradient across the membrane. The alpha chain is a regulatory subunit. The polypeptide is ATP synthase subunit alpha (Haemophilus influenzae (strain PittEE)).